A 304-amino-acid polypeptide reads, in one-letter code: MRLPIFLDTDPGIDDAVAIAAAIFAPELDLQLMTTVAGNVSVEKTTRNALQLLHFWNAEIPLAQGAAVPLVRAPRDAVSVHGESGMAGYDFVEHNRKPLGIPAFLAIRDALMRAPEPVTLVAIGPLTNIALLLSQCPECKPYIRRLVIMGGSAGRGNCTPNAEFNIAADPEAAACVFRSGIEIVMCGLDVTNQAILTPDYLATLPELNRTGKMLHALFSHYRSGSMQSGLRMHDLCAIAWLVRPELFTLKPCFVAVETQGEFTSGTTVVDIDGCLGKPANVKVALDLDVKGFQQWVAEVLALAS.

His233 is an active-site residue.

The protein belongs to the IUNH family. RihC subfamily.

Its function is as follows. Hydrolyzes both purine and pyrimidine ribonucleosides with a broad-substrate specificity. This chain is Non-specific ribonucleoside hydrolase RihC, found in Escherichia coli O139:H28 (strain E24377A / ETEC).